A 334-amino-acid chain; its full sequence is N-acetyl-gamma-glutamyl-phosphate reductase (334 aa).

C154 is an active-site residue.

It belongs to the NAGSA dehydrogenase family. Type 1 subfamily.

It is found in the cytoplasm. The enzyme catalyses N-acetyl-L-glutamate 5-semialdehyde + phosphate + NADP(+) = N-acetyl-L-glutamyl 5-phosphate + NADPH + H(+). It functions in the pathway amino-acid biosynthesis; L-arginine biosynthesis; N(2)-acetyl-L-ornithine from L-glutamate: step 3/4. Its function is as follows. Catalyzes the NADPH-dependent reduction of N-acetyl-5-glutamyl phosphate to yield N-acetyl-L-glutamate 5-semialdehyde. This is N-acetyl-gamma-glutamyl-phosphate reductase from Photorhabdus laumondii subsp. laumondii (strain DSM 15139 / CIP 105565 / TT01) (Photorhabdus luminescens subsp. laumondii).